Here is a 455-residue protein sequence, read N- to C-terminus: Ribulose bisphosphate carboxylase large chain (455 aa).

Lys-5 is subject to N6,N6,N6-trimethyllysine. Residues Asn-114 and Thr-164 each contribute to the substrate site. The active-site Proton acceptor is Lys-166. Position 168 (Lys-168) interacts with substrate. Mg(2+)-binding residues include Lys-192, Asp-194, and Glu-195. The residue at position 192 (Lys-192) is an N6-carboxylysine. The active-site Proton acceptor is His-285. Arg-286, His-318, and Ser-370 together coordinate substrate.

The protein belongs to the RuBisCO large chain family. Type I subfamily. Heterohexadecamer of 8 large chains and 8 small chains; disulfide-linked. The disulfide link is formed within the large subunit homodimers. Requires Mg(2+) as cofactor. In terms of processing, the disulfide bond which can form in the large chain dimeric partners within the hexadecamer appears to be associated with oxidative stress and protein turnover.

The protein resides in the plastid. It localises to the chloroplast. It catalyses the reaction 2 (2R)-3-phosphoglycerate + 2 H(+) = D-ribulose 1,5-bisphosphate + CO2 + H2O. The enzyme catalyses D-ribulose 1,5-bisphosphate + O2 = 2-phosphoglycolate + (2R)-3-phosphoglycerate + 2 H(+). RuBisCO catalyzes two reactions: the carboxylation of D-ribulose 1,5-bisphosphate, the primary event in carbon dioxide fixation, as well as the oxidative fragmentation of the pentose substrate in the photorespiration process. Both reactions occur simultaneously and in competition at the same active site. The sequence is that of Ribulose bisphosphate carboxylase large chain from Lupinus albus (White lupine).